The primary structure comprises 515 residues: Cytochrome P450 monooxygenase janP (515 aa).

The chain crosses the membrane as a helical span at residues 20-36 (GFLWKYAAFMVFIYLLL). Cys456 contributes to the heme binding site. A glycan (N-linked (GlcNAc...) asparagine) is linked at Asn501.

Belongs to the cytochrome P450 family. It depends on heme as a cofactor.

The protein localises to the membrane. It functions in the pathway secondary metabolite biosynthesis. Functionally, cytochrome P450 monooxygenase; part of the gene cluster that mediates the biosynthesis of the indole diterpenes janthitremanes such as shearinine K or shearinine A. The geranylgeranyl diphosphate (GGPP) synthase janG catalyzes the first step in janthitremane biosynthesis via conversion of farnesyl pyrophosphate and isopentyl pyrophosphate into geranylgeranyl pyrophosphate (GGPP). Condensation of indole-3-glycerol phosphate with GGPP by the prenyl transferase janC then forms 3-geranylgeranylindole (3-GGI). Epoxidation by the FAD-dependent monooxygenase janM leads to a epoxidized-GGI that is substrate of the terpene cyclase janB for cyclization to yield paspaline. Paspaline is subsequently converted to 13-desoxypaspaline by the cytochrome P450 monooxygenase janP, via beta-PC-M6 in a series of alpha-face oxidations. The cytochrome P450 monooxygenase janQ is proposed to carry out sequential beta-face oxidation steps at C-7 and C-13 of 13-desoxypaspaline to form paspalicine and paspalinine respectively. The indole diterpene prenyltransferase janD may then convert paspalinine into shearinine K which is substrate of janO and/or additional enzymes for oxidation and cyclization to generate shearinine A. This chain is Cytochrome P450 monooxygenase janP, found in Penicillium janthinellum (Penicillium vitale).